We begin with the raw amino-acid sequence, 210 residues long: Transcription factor ALC (210 aa).

The interval methionine 1–threonine 49 is disordered. A compositionally biased stretch (polar residues) spans leucine 27–glutamate 48. Residues isoleucine 93 to leucine 142 enclose the bHLH domain.

Homodimer. As to expression, expressed constitutively in roots, leaves, stems, and flowers. Confined to the valve margins of the silique.

The protein resides in the nucleus. In terms of biological role, required for the dehiscence of fruit, especially for the separation of the valve cells from the replum. Promotes the differentiation of a strip of labile nonlignified cells sandwiched between layers of lignified cells. This chain is Transcription factor ALC (ALC), found in Arabidopsis thaliana (Mouse-ear cress).